Consider the following 247-residue polypeptide: tRNA pseudouridine synthase A (247 aa).

The active-site Nucleophile is the aspartate 53. Substrate is bound at residue tyrosine 111.

Belongs to the tRNA pseudouridine synthase TruA family. In terms of assembly, homodimer.

The catalysed reaction is uridine(38/39/40) in tRNA = pseudouridine(38/39/40) in tRNA. Its function is as follows. Formation of pseudouridine at positions 38, 39 and 40 in the anticodon stem and loop of transfer RNAs. In Bacillus subtilis (strain 168), this protein is tRNA pseudouridine synthase A.